The sequence spans 490 residues: 2-succinylbenzoate--CoA ligase (490 aa).

Belongs to the ATP-dependent AMP-binding enzyme family. MenE subfamily.

It catalyses the reaction 2-succinylbenzoate + ATP + CoA = 2-succinylbenzoyl-CoA + AMP + diphosphate. Its pathway is quinol/quinone metabolism; 1,4-dihydroxy-2-naphthoate biosynthesis; 1,4-dihydroxy-2-naphthoate from chorismate: step 5/7. It participates in quinol/quinone metabolism; menaquinone biosynthesis. Functionally, converts 2-succinylbenzoate (OSB) to 2-succinylbenzoyl-CoA (OSB-CoA). This is 2-succinylbenzoate--CoA ligase from Geobacillus kaustophilus (strain HTA426).